A 377-amino-acid chain; its full sequence is All-trans-retinol dehydrogenase [NAD(+)] ADH4 (377 aa).

Cys-47 provides a ligand contact to Zn(2+). Residue Thr-49 coordinates NAD(+). Zn(2+)-binding residues include His-68, Cys-98, Cys-101, Cys-104, Cys-112, and Cys-179. NAD(+) is bound by residues 204–209 (GLGCVG), Asp-228, Lys-233, 297–299 (VGA), 320–322 (TFF), and Arg-372.

Belongs to the zinc-containing alcohol dehydrogenase family. Class-II subfamily. As to quaternary structure, dimer. The cofactor is Zn(2+). In terms of tissue distribution, liver specific.

It localises to the cytoplasm. The enzyme catalyses all-trans-retinol + NAD(+) = all-trans-retinal + NADH + H(+). It catalyses the reaction 9-cis-retinol + NAD(+) = 9-cis-retinal + NADH + H(+). It carries out the reaction 20-hydroxy-(5Z,8Z,11Z,14Z)-eicosatetraenoate + NAD(+) = 20-oxo-(5Z,8Z,11Z,14Z)-eicosatetraenoate + NADH + H(+). The catalysed reaction is 20-oxo-(5Z,8Z,11Z,14Z)-eicosatetraenoate + NAD(+) + H2O = (5Z,8Z,11Z,14Z)-eicosatetraenedioate + NADH + 2 H(+). The enzyme catalyses 1,4-benzoquinone + NADH + H(+) = hydroquinone + NAD(+). Its activity is regulated as follows. Oxidation of 20-HETE is inhibited by low concentrations of N-heptylformamide. Oxidation of 20-HETE is a decreased by 55-65% by either all-trans-retinol or all-trans-retinoic acid. Strongly inhibited by omega-hydroxy fatty acids. Its function is as follows. Catalyzes the NAD-dependent oxidation of either all-trans-retinol or 9-cis-retinol. Also oxidizes long chain omega-hydroxy fatty acids, such as 20-HETE, producing both the intermediate aldehyde, 20-oxoarachidonate and the end product, a dicarboxylic acid, (5Z,8Z,11Z,14Z)-eicosatetraenedioate. Also catalyzes the reduction of benzoquinones. The protein is All-trans-retinol dehydrogenase [NAD(+)] ADH4 of Mus musculus (Mouse).